A 193-amino-acid chain; its full sequence is Rho-related protein racF2 (193 aa).

A GTP-binding site is contributed by 10–17 (GDGAVGKT). The short motif at 32–40 (YLPTVFDNY) is the Effector region element. GTP-binding positions include 57 to 61 (DTAGQ) and 115 to 118 (TKQD). C190 carries the cysteine methyl ester modification. A lipid anchor (S-geranylgeranyl cysteine) is attached at C190. Positions 191–193 (TIM) are cleaved as a propeptide — removed in mature form.

Belongs to the small GTPase superfamily. Rho family.

The protein resides in the cell membrane. This Dictyostelium discoideum (Social amoeba) protein is Rho-related protein racF2 (racF2).